The primary structure comprises 230 residues: Ion-translocating oxidoreductase complex subunit E (230 aa).

5 consecutive transmembrane segments (helical) span residues 39–59, 69–89, 93–113, 124–144, and 182–202; these read LGLG…VSLV, IPVF…LMNA, GLYL…IIIG, VLPA…VLVV, and AFLL…LIAA.

This sequence belongs to the NqrDE/RnfAE family. The complex is composed of six subunits: RnfA, RnfB, RnfC, RnfD, RnfE and RnfG.

It is found in the cell inner membrane. Functionally, part of a membrane-bound complex that couples electron transfer with translocation of ions across the membrane. The chain is Ion-translocating oxidoreductase complex subunit E from Vibrio cholerae serotype O1 (strain ATCC 39315 / El Tor Inaba N16961).